The sequence spans 521 residues: Occludin (521 aa).

Residues 1–20 (MSVRPFESPPPYRPDEFKPN) form a disordered region. Residues 1–66 (MSVRPFESPP…KWTSPPGVIR (66 aa)) are Cytoplasmic-facing. The region spanning 60–267 (SPPGVIRILS…IIFFAVKTRR (208 aa)) is the MARVEL domain. Residues 67–89 (ILSMLIIVMCIAIFACVASTLAW) traverse the membrane as a helical segment. The Extracellular segment spans residues 90 to 133 (DRGYGTGLFGGSLNYPYSGFGYGGGYGGGYGGYGYGYGGYTDPR). The helical transmembrane segment at 134–158 (AAKGFLLAMAAFCFIASLVIFVTSV) threads the bilayer. Topologically, residues 159–168 (IRSGMSRTRR) are cytoplasmic. The helical transmembrane segment at 169–193 (YYLIVIIVSAILGIMVFIATIVYIM) threads the bilayer. Residues 194-241 (GVNPTAQASGSMYGSQIYMICNQFYTPGGTGLYVDQYLYHYCVVDPQE) are Extracellular-facing. A disulfide bridge links Cys214 with Cys235. The chain crosses the membrane as a helical span at residues 242–263 (AIAIVLGFMIIVAFALIIFFAV). Residues 264–521 (KTRRKMDRYD…MVGDYDRRKP (258 aa)) are Cytoplasmic-facing. Phosphoserine is present on Ser300. The interval 300–329 (SAGTQDMPPPPSDYAERVDSPMAYSSNGKV) is disordered. A Phosphothreonine modification is found at Thr303. A phosphoserine mark is found at Ser311 and Ser319. Ser338 is subject to Phosphoserine; by PKC; in vitro. Ser358 is subject to Phosphoserine. Residues 361-405 (DFRQPRYSSNGNLETPSKRAPTKGKAGKGKRTDPDHYETDYTTGG) form a disordered region. The span at 366–375 (RYSSNGNLET) shows a compositional bias: polar residues. A Phosphotyrosine modification is found at Tyr367. Phosphoserine occurs at positions 368 and 369. The segment covering 380–389 (APTKGKAGKG) has biased composition (basic residues). The span at 390 to 399 (KRTDPDHYET) shows a compositional bias: basic and acidic residues. Residues Tyr397 and Tyr401 each carry the phosphotyrosine modification. A Phosphothreonine; by PKC/PRKCH modification is found at Thr402. Thr403 bears the Phosphothreonine mark. Ser407 carries the phosphoserine modification. In terms of domain architecture, OCEL spans 413–521 (EDWVREYPPI…MVGDYDRRKP (109 aa)). The stretch at 424-488 (SDQQRQLYKR…EYNRLKQVKG (65 aa)) forms a coiled coil. Ser489 is modified (phosphoserine).

Belongs to the ELL/occludin family. In terms of assembly, interacts with TJP1/ZO1. Interacts with VAPA. Interacts with CLDN1, CLDN6, CLDN9, CLDN11, CLDN12 and CLDN17. Interacts with PLSCR1. Interacts with LSR, ILDR1 and ILDR2. Interacts with TJP2/ZO2. Post-translationally, dephosphorylated by PTPRJ. May be phosphorylated by PKC during translocation to cell-cell contacts. As to expression, localized at tight junctions of both epithelial and endothelial cells. Highly expressed in the testis, kidney, lung, liver and brain. Not detected in skeletal muscle, spleen and heart.

It localises to the cell membrane. It is found in the cell junction. Its subcellular location is the tight junction. Its function is as follows. May play a role in the formation and regulation of the tight junction (TJ) paracellular permeability barrier. The sequence is that of Occludin (Ocln) from Mus musculus (Mouse).